The primary structure comprises 225 residues: 3-demethoxyubiquinol 3-hydroxylase (225 aa).

A compositionally biased stretch (polar residues) spans 1–11 (MSVASTSSGFT). A disordered region spans residues 1-20 (MSVASTSSGFTPFSRRRGPL). Fe cation is bound by residues glutamate 74, glutamate 104, histidine 107, glutamate 156, glutamate 188, and histidine 191. Residues 181 to 203 (VSQMKDDEAQHRASAERAGGVPL) form a disordered region. A compositionally biased stretch (basic and acidic residues) spans 184 to 195 (MKDDEAQHRASA).

Belongs to the COQ7 family. It depends on Fe cation as a cofactor.

It localises to the cell membrane. The enzyme catalyses a 5-methoxy-2-methyl-3-(all-trans-polyprenyl)benzene-1,4-diol + AH2 + O2 = a 3-demethylubiquinol + A + H2O. Its pathway is cofactor biosynthesis; ubiquinone biosynthesis. Catalyzes the hydroxylation of 2-nonaprenyl-3-methyl-6-methoxy-1,4-benzoquinol during ubiquinone biosynthesis. The sequence is that of 3-demethoxyubiquinol 3-hydroxylase from Bordetella petrii (strain ATCC BAA-461 / DSM 12804 / CCUG 43448).